The primary structure comprises 556 residues: Undecaprenyl phosphate-alpha-4-amino-4-deoxy-L-arabinose arabinosyl transferase (556 aa).

The next 11 helical transmembrane spans lie at 5–25 (MIKLKSTVILVLFALLYLLPL), 88–108 (FASVFSTALSALLVFWLALLL), 116–136 (LLAATIYLTSLLVYGIGTYSV), 179–199 (FMTKGFLALALPVISVLPVAL), 207–227 (LLLFGPLAIVVAVLLSAPWAL), 258–278 (APFWYYLPVLIVGTFPWLALL), 296–316 (FLLLCWMVMPLLFFSIAKGKL), 319–339 (YILPCFAPLALLMAAWISGLA), 355–375 (LAFGSVLALAVAALGLGIIMP), 384–404 (LTIVSGVVCFVGWVAFAAVSL), and 410–430 (WGYLVAGCPLFLALLVGGSIP).

Belongs to the glycosyltransferase 83 family.

It localises to the cell inner membrane. It carries out the reaction 4-amino-4-deoxy-alpha-L-arabinopyranosyl di-trans,octa-cis-undecaprenyl phosphate + lipid IVA = lipid IIA + di-trans,octa-cis-undecaprenyl phosphate.. It participates in lipopolysaccharide metabolism; 4-amino-4-deoxy-beta-L-arabinose-lipid A biosynthesis. Its function is as follows. Catalyzes the transfer of the L-Ara4N moiety of the glycolipid undecaprenyl phosphate-alpha-L-Ara4N to lipid A. The modified arabinose is attached to lipid A and is required for resistance to polymyxin and cationic antimicrobial peptides. The polypeptide is Undecaprenyl phosphate-alpha-4-amino-4-deoxy-L-arabinose arabinosyl transferase (Pectobacterium carotovorum subsp. carotovorum (strain PC1)).